We begin with the raw amino-acid sequence, 249 residues long: Probable transcriptional regulatory protein LBL_2537 (249 aa).

Belongs to the TACO1 family.

The protein resides in the cytoplasm. In Leptospira borgpetersenii serovar Hardjo-bovis (strain L550), this protein is Probable transcriptional regulatory protein LBL_2537.